Reading from the N-terminus, the 296-residue chain is Prostate androgen-regulated mucin-like protein 1 homolog (296 aa).

A signal peptide spans 1-20; sequence MVCKVLIALCIFTAGLRVQG. The Extracellular segment spans residues 21–244; the sequence is SPTVPLPVSL…EVENALSSGS (224 aa). N61 and N95 each carry an N-linked (GlcNAc...) asparagine glycan. Residues 72-220 form a disordered region; it reads LTSQLPTDHR…SPQDTEPGKV (149 aa). Residues 78 to 95 are compositionally biased toward basic and acidic residues; the sequence is TDHREEAVTSPPLKRDVN. The span at 96–110 shows a compositional bias: polar residues; the sequence is STDSSPAGFPSTSSD. Positions 139-167 are enriched in low complexity; it reads LLSSQAPTSATTSPATSLSESLSASVTSS. Residues 168-177 show a composition bias toward polar residues; sequence HNSTVANIQP. N169 is a glycosylation site (N-linked (GlcNAc...) asparagine). The segment covering 206–217 has biased composition (basic and acidic residues); it reads VPKEKSPQDTEP. Residues 245-265 traverse the membrane as a helical segment; it reads IAAITVTVIAVVLLVFGGAAY. Topologically, residues 266–296 are cytoplasmic; sequence LKIRHSSYGRLLDDHDYGSWGNYNNPLYDDS. S284 carries the post-translational modification Phosphoserine.

This sequence belongs to the PARM family. Post-translationally, highly N-glycosylated and O-glycosylated.

It localises to the cell membrane. Its subcellular location is the golgi apparatus membrane. It is found in the endosome membrane. Its function is as follows. May regulate TLP1 expression and telomerase activity, thus enabling certain prostatic cells to resist apoptosis. The polypeptide is Prostate androgen-regulated mucin-like protein 1 homolog (Parm1) (Mus musculus (Mouse)).